Here is a 252-residue protein sequence, read N- to C-terminus: Expansin-A12 (252 aa).

The first 23 residues, 1–23, serve as a signal peptide directing secretion; sequence MDMKGTYLVTVILLVSTLSVGMC. The Expansin-like EG45 domain maps to 45–156; that stretch reads GGACGYDNPY…RRVGCKRRGG (112 aa). Residues 166–246 form the Expansin-like CBD domain; it reads NFNMVMISNV…SWWFGQTFSS (81 aa).

The protein belongs to the expansin family. Expansin A subfamily.

It is found in the secreted. Its subcellular location is the cell wall. The protein resides in the membrane. Functionally, causes loosening and extension of plant cell walls by disrupting non-covalent bonding between cellulose microfibrils and matrix glucans. No enzymatic activity has been found. This chain is Expansin-A12 (EXPA12), found in Arabidopsis thaliana (Mouse-ear cress).